Here is a 337-residue protein sequence, read N- to C-terminus: MDYRTLHPQIAAAYRVLETGSPISQAEALLLAELPGELVLDLASLANKVKNRYGTGSAGSELLHACSIMNAKSGVCGENCRFCAQSRHNRADIEVYDLVDAESVLIEARNCFAEGVSHFGIVTSGYGYKRINPEFQRVLDMIDRLHEELPELSVCASLGMLGEEPAEALAAHGIAHYNINIQVVPDRYHDLIADTHSVEERIETIKLLRKNNISVCCGGIMGVGETMQERIAMIFALQELDVSVIPLNVLVPIEGTPLAGKEPLSVAEIVKTFAICRLAHPHKIIKFAAGRETIMKDFQGLLMLSGANGFLTGGYLTTRGRDIADDRRFASQIASFN.

The Radical SAM core domain maps to 58–288 (AGSELLHACS…AHPHKIIKFA (231 aa)). [4Fe-4S] cluster contacts are provided by C76, C80, and C83. [2Fe-2S] cluster-binding residues include C155, C216, and K286.

It belongs to the radical SAM superfamily. Biotin synthase family. In terms of assembly, homodimer. [4Fe-4S] cluster serves as cofactor. The cofactor is [2Fe-2S] cluster.

It carries out the reaction (4R,5S)-dethiobiotin + (sulfur carrier)-SH + 2 reduced [2Fe-2S]-[ferredoxin] + 2 S-adenosyl-L-methionine = (sulfur carrier)-H + biotin + 2 5'-deoxyadenosine + 2 L-methionine + 2 oxidized [2Fe-2S]-[ferredoxin]. It participates in cofactor biosynthesis; biotin biosynthesis; biotin from 7,8-diaminononanoate: step 2/2. Its function is as follows. Catalyzes the conversion of dethiobiotin (DTB) to biotin by the insertion of a sulfur atom into dethiobiotin via a radical-based mechanism. The sequence is that of Biotin synthase from Pelodictyon phaeoclathratiforme (strain DSM 5477 / BU-1).